Reading from the N-terminus, the 328-residue chain is Phenylalanine--tRNA ligase alpha subunit (328 aa).

Glu-253 is a binding site for Mg(2+).

It belongs to the class-II aminoacyl-tRNA synthetase family. Phe-tRNA synthetase alpha subunit type 1 subfamily. Tetramer of two alpha and two beta subunits. Mg(2+) is required as a cofactor.

The protein localises to the cytoplasm. The catalysed reaction is tRNA(Phe) + L-phenylalanine + ATP = L-phenylalanyl-tRNA(Phe) + AMP + diphosphate + H(+). This is Phenylalanine--tRNA ligase alpha subunit from Chromobacterium violaceum (strain ATCC 12472 / DSM 30191 / JCM 1249 / CCUG 213 / NBRC 12614 / NCIMB 9131 / NCTC 9757 / MK).